The primary structure comprises 309 residues: uncharacterized protein (309 aa).

This sequence to S.pombe SpAC14C4.04.

This is an uncharacterized protein from Schizosaccharomyces pombe (strain 972 / ATCC 24843) (Fission yeast).